A 428-amino-acid chain; its full sequence is Ectonucleoside triphosphate diphosphohydrolase 5 (428 aa).

An N-terminal signal peptide occupies residues 1–24 (MTSSRLPVLLALVFSSLSPVLSHS). The Proton acceptor role is filled by glutamate 172. An N-linked (GlcNAc...) asparagine glycan is attached at asparagine 232. 2 cysteine pairs are disulfide-bonded: cysteine 272–cysteine 303 and cysteine 363–cysteine 377.

It belongs to the GDA1/CD39 NTPase family. Monomer; active form. Homodimer; disulfide-linked. Homodimers are enzymatically inactive. The cofactor is Ca(2+). Requires Mg(2+) as cofactor.

The protein resides in the endoplasmic reticulum. It localises to the secreted. It catalyses the reaction a ribonucleoside 5'-diphosphate + H2O = a ribonucleoside 5'-phosphate + phosphate + H(+). The enzyme catalyses GDP + H2O = GMP + phosphate + H(+). The catalysed reaction is UDP + H2O = UMP + phosphate + H(+). It carries out the reaction IDP + H2O = IMP + phosphate + H(+). It catalyses the reaction CDP + H2O = CMP + phosphate + H(+). The enzyme catalyses ADP + H2O = AMP + phosphate + H(+). It participates in protein modification; protein glycosylation. Functionally, hydrolyzes nucleoside diphosphates with a preference for GDP, IDP and UDP compared to ADP and CDP. In the lumen of the endoplasmic reticulum, hydrolyzes UDP that acts as an end-product feedback inhibitor of the UDP-Glc:glycoprotein glucosyltransferases. UMP can be transported back by an UDP-sugar antiporter to the cytosol where it is consumed to regenerate UDP-glucose. Therefore, it positively regulates protein reglucosylation by clearing UDP from the ER lumen and by promoting the regeneration of UDP-glucose. Protein reglucosylation is essential to proper glycoprotein folding and quality control in the ER. The sequence is that of Ectonucleoside triphosphate diphosphohydrolase 5 (ENTPD5) from Gallus gallus (Chicken).